We begin with the raw amino-acid sequence, 223 residues long: MIF4G domain-containing protein (223 aa).

Positions 9 to 206 (DYKIQGFDAD…LEMIEYRAAG (198 aa)) constitute an MIF4G domain.

This sequence belongs to the MIF4GD family. Interacts with eif4g1, eif4g2 and slbp; probably tethered by SLBP to the 3'-end of mRNAs ending with the histone stem-loop, it also interacts with eif4g1 which is bound to their 5'-end.

It localises to the cytoplasm. The protein resides in the nucleus. Functionally, functions in replication-dependent translation of histone mRNAs which differ from other eukaryotic mRNAs in that they do not end with a poly-A tail but a stem-loop. May participate in circularizing those mRNAs specifically enhancing their translation. The sequence is that of MIF4G domain-containing protein (mif4gd) from Xenopus tropicalis (Western clawed frog).